A 56-amino-acid chain; its full sequence is Ribosome modulation factor (56 aa).

This sequence belongs to the ribosome modulation factor family.

The protein resides in the cytoplasm. During stationary phase, converts 70S ribosomes to an inactive dimeric form (100S ribosomes). This chain is Ribosome modulation factor, found in Proteus mirabilis (strain HI4320).